A 1412-amino-acid polypeptide reads, in one-letter code: ABC transporter C family member 3 (1412 aa).

The interval 1–34 (MELEEVGVEANQPNNDQGSKKQNKNKDKKVKKEK) is disordered. Residues 21–34 (KQNKNKDKKVKKEK) are compositionally biased toward basic residues. The next 6 helical transmembrane spans lie at 115-135 (FGLYFVLSWFFYAIYAASQFV), 161-181 (MGYYYALIMFGSAMIGSVCLY), 236-256 (VFQLVNNGVFALPQIIVCLAL), 261-281 (IGWPTFVGLGLMLAAVPFNGI), 346-366 (AMLIVIVAALPTAVSVLVFSS), and 379-399 (IFAALSYLNILRLPLGFLPII). The ABC transmembrane type-1 1 domain occupies 119–405 (FVLSWFFYAI…LPIIVALGIQ (287 aa)). One can recognise an ABC transporter 1 domain in the interval 439–662 (IRDATLTWNQ…QKEFSGLLQA (224 aa)). 474–481 (GSVGSGKS) provides a ligand contact to ATP. 5 consecutive transmembrane segments (helical) span residues 724-744 (WKYITVGGGFLFLMAFIFFLM), 787-807 (IYIGVGMTSILISAGRNFLFF), 854-874 (NLMATSISQFLVFFTTVVATL), 875-895 (IIISIITPFLLVPLAPICIIF), and 967-987 (WLGLRLDLLANLVTFFACLFI). Residues 735-1025 (FLMAFIFFLM…ATLQAADTET (291 aa)) form the ABC transmembrane type-1 2 domain. One can recognise an ABC transporter 2 domain in the interval 1062–1296 (ITFDNLVMRY…PAGLLNWLVE (235 aa)). An ATP-binding site is contributed by 1096–1103 (GRTGAGKS). Residues 1316–1412 (GVNIDQITPP…DNDNSEAGDN (97 aa)) form a disordered region. Residues 1342 to 1351 (NINSPPQQSL) are compositionally biased toward polar residues. Residues 1367 to 1397 (DNNNNNNNNNNNNNNNNNNNNNNNNNNNNND) are compositionally biased toward low complexity. Acidic residues predominate over residues 1398 to 1412 (NDNDNDNDNSEAGDN).

The protein belongs to the ABC transporter superfamily. ABCC family. Conjugate transporter (TC 3.A.1.208) subfamily.

It localises to the membrane. The sequence is that of ABC transporter C family member 3 (abcC3) from Dictyostelium discoideum (Social amoeba).